A 260-amino-acid polypeptide reads, in one-letter code: Methanethiol S-methyltransferase (260 aa).

Transmembrane regions (helical) follow at residues Cys27 to Val47, Pro55 to Ala75, Cys107 to Val127, Gly134 to Ile154, and Phe196 to Leu216.

It belongs to the nurim family.

The protein localises to the membrane. It carries out the reaction methanethiol + S-adenosyl-L-methionine = dimethyl sulfide + S-adenosyl-L-homocysteine + H(+). Catalyzes the methylation of methanethiol (MeSH) to yield dimethylsulphide (DMS). This chain is Methanethiol S-methyltransferase, found in Pseudomonas sp. (strain GM41(2012)).